Here is a 506-residue protein sequence, read N- to C-terminus: 2-isopropylmalate synthase (506 aa).

Positions 4 to 266 constitute a Pyruvate carboxyltransferase domain; the sequence is ILFMDTTLRD…EPSMTLKEIK (263 aa). Asp-13, His-201, His-203, and Asn-237 together coordinate Mn(2+). Residues 390–506 are regulatory domain; it reads NITQLQVHFV…KLKSFIQLVK (117 aa).

The protein belongs to the alpha-IPM synthase/homocitrate synthase family. LeuA type 1 subfamily. As to quaternary structure, homodimer. Requires Mn(2+) as cofactor.

The protein resides in the cytoplasm. The catalysed reaction is 3-methyl-2-oxobutanoate + acetyl-CoA + H2O = (2S)-2-isopropylmalate + CoA + H(+). It participates in amino-acid biosynthesis; L-leucine biosynthesis; L-leucine from 3-methyl-2-oxobutanoate: step 1/4. Its function is as follows. Catalyzes the condensation of the acetyl group of acetyl-CoA with 3-methyl-2-oxobutanoate (2-ketoisovalerate) to form 3-carboxy-3-hydroxy-4-methylpentanoate (2-isopropylmalate). This chain is 2-isopropylmalate synthase, found in Bacillus cereus (strain AH820).